A 269-amino-acid polypeptide reads, in one-letter code: MTQIKLPLRSVSQINQYTKCPMAYKLARIDKVWQRPAAWLPQGTAFHAVAEAVEVWESYGMPLTLDEAKDMFRWHYANDVGAFTEETPNFEWWTWSGPYNGQRDIERRYTVGLEQVEKFFAWRGTPGQEIWVTPDGTPAIELYFEIELDGILVRGYIDAVVVVDGELRVRDYKTGNQPGDDFQLGVYALAVAMTYGVEAPKTGDYFMVGKKGKAPKPTKPYDLTKWTREAITEEFHRVEEGIAASMFDPLPEPDKCKFCDVSYSCPVFK.

The sequence is that of Gene 69 protein (69) from Mycobacterium (Mycobacteriophage D29).